Consider the following 127-residue polypeptide: Large ribosomal subunit protein bL12 (127 aa).

This sequence belongs to the bacterial ribosomal protein bL12 family. In terms of assembly, homodimer. Part of the ribosomal stalk of the 50S ribosomal subunit. Forms a multimeric L10(L12)X complex, where L10 forms an elongated spine to which 2 to 4 L12 dimers bind in a sequential fashion. Binds GTP-bound translation factors.

Forms part of the ribosomal stalk which helps the ribosome interact with GTP-bound translation factors. Is thus essential for accurate translation. The chain is Large ribosomal subunit protein bL12 from Clavibacter michiganensis subsp. michiganensis (strain NCPPB 382).